The following is a 239-amino-acid chain: Fatty acid metabolism regulator protein (239 aa).

Residues K6–F74 form the HTH gntR-type domain. The segment at residues E34 to Q53 is a DNA-binding region (H-T-H motif).

As to quaternary structure, homodimer.

It localises to the cytoplasm. Multifunctional regulator of fatty acid metabolism. This Shewanella frigidimarina (strain NCIMB 400) protein is Fatty acid metabolism regulator protein.